The chain runs to 152 residues: Large ribosomal subunit protein bL9 (152 aa).

Belongs to the bacterial ribosomal protein bL9 family.

In terms of biological role, binds to the 23S rRNA. This is Large ribosomal subunit protein bL9 from Streptococcus thermophilus (strain CNRZ 1066).